We begin with the raw amino-acid sequence, 150 residues long: Auxin-binding protein 5 (150 aa).

The first 41 residues, 1–41 (MVRRRPATGAAQRPQLAAVGRGLLLASVLAAAASSLPVAES), serve as a signal peptide directing secretion. The Zn(2+) site is built by His-98, His-100, and Glu-104. N-linked (GlcNAc...) asparagine glycosylation is present at Asn-136. His-147 is a binding site for Zn(2+).

Homodimer.

It localises to the endoplasmic reticulum lumen. In terms of biological role, this is probably a receptor for the plant hormone auxin. This Zea mays (Maize) protein is Auxin-binding protein 5 (ABP5).